A 235-amino-acid chain; its full sequence is Proteasome subunit alpha type-2-B (235 aa).

A Glycyl lysine isopeptide (Lys-Gly) (interchain with G-Cter in ubiquitin) cross-link involves residue K64.

This sequence belongs to the peptidase T1A family. As to quaternary structure, component of the 20S core complex of the 26S proteasome. The 26S proteasome is composed of a core protease (CP), known as the 20S proteasome, capped at one or both ends by the 19S regulatory particle (RP/PA700). The 20S proteasome core is composed of 28 subunits that are arranged in four stacked rings, resulting in a barrel-shaped structure. The two end rings are each formed by seven alpha subunits, and the two central rings are each formed by seven beta subunits. The catalytic chamber with the active sites is on the inside of the barrel.

The protein resides in the cytoplasm. Its subcellular location is the nucleus. Functionally, the proteasome is a multicatalytic proteinase complex which is characterized by its ability to cleave peptides with Arg, Phe, Tyr, Leu, and Glu adjacent to the leaving group at neutral or slightly basic pH. The proteasome has an ATP-dependent proteolytic activity. The chain is Proteasome subunit alpha type-2-B (PAB2) from Arabidopsis thaliana (Mouse-ear cress).